The primary structure comprises 332 residues: Fructose-1,6-bisphosphatase class 1 (332 aa).

Mg(2+) is bound by residues E89, D110, L112, and D113. Residues 113 to 116, N206, Y239, 257 to 259, and K269 contribute to the substrate site; these read DGSS and YLY. E275 provides a ligand contact to Mg(2+).

It belongs to the FBPase class 1 family. As to quaternary structure, homotetramer. Mg(2+) is required as a cofactor.

The protein resides in the cytoplasm. The enzyme catalyses beta-D-fructose 1,6-bisphosphate + H2O = beta-D-fructose 6-phosphate + phosphate. Its pathway is carbohydrate biosynthesis; gluconeogenesis. The protein is Fructose-1,6-bisphosphatase class 1 of Citrobacter koseri (strain ATCC BAA-895 / CDC 4225-83 / SGSC4696).